The following is a 261-amino-acid chain: 1-(5-phosphoribosyl)-5-[(5-phosphoribosylamino)methylideneamino] imidazole-4-carboxamide isomerase (261 aa).

Belongs to the HisA/HisF family.

It is found in the cytoplasm. It catalyses the reaction 1-(5-phospho-beta-D-ribosyl)-5-[(5-phospho-beta-D-ribosylamino)methylideneamino]imidazole-4-carboxamide = 5-[(5-phospho-1-deoxy-D-ribulos-1-ylimino)methylamino]-1-(5-phospho-beta-D-ribosyl)imidazole-4-carboxamide. The protein operates within amino-acid biosynthesis; L-histidine biosynthesis; L-histidine from 5-phospho-alpha-D-ribose 1-diphosphate: step 4/9. Its function is as follows. Catalyzes the isomerization of the aminoaldose moiety of ProFAR to the aminoketose of PRFAR. The protein is 1-(5-phosphoribosyl)-5-[(5-phosphoribosylamino)methylideneamino] imidazole-4-carboxamide isomerase of Saccharomyces cerevisiae (strain ATCC 204508 / S288c) (Baker's yeast).